We begin with the raw amino-acid sequence, 412 residues long: CCA-adding enzyme (412 aa).

ATP contacts are provided by Gly8 and Arg11. Positions 8 and 11 each coordinate CTP. Mg(2+) is bound by residues Asp21 and Asp23. Residues Arg91, Arg137, and Arg140 each contribute to the ATP site. The CTP site is built by Arg91, Arg137, and Arg140.

This sequence belongs to the tRNA nucleotidyltransferase/poly(A) polymerase family. Bacterial CCA-adding enzyme type 2 subfamily. It depends on Mg(2+) as a cofactor.

It catalyses the reaction a tRNA precursor + 2 CTP + ATP = a tRNA with a 3' CCA end + 3 diphosphate. The catalysed reaction is a tRNA with a 3' CCA end + 2 CTP + ATP = a tRNA with a 3' CCACCA end + 3 diphosphate. Catalyzes the addition and repair of the essential 3'-terminal CCA sequence in tRNAs without using a nucleic acid template. Adds these three nucleotides in the order of C, C, and A to the tRNA nucleotide-73, using CTP and ATP as substrates and producing inorganic pyrophosphate. tRNA 3'-terminal CCA addition is required both for tRNA processing and repair. Also involved in tRNA surveillance by mediating tandem CCA addition to generate a CCACCA at the 3' terminus of unstable tRNAs. While stable tRNAs receive only 3'-terminal CCA, unstable tRNAs are marked with CCACCA and rapidly degraded. This chain is CCA-adding enzyme, found in Buchnera aphidicola subsp. Schizaphis graminum (strain Sg).